Here is a 439-residue protein sequence, read N- to C-terminus: Ribosomal protein uS12 methylthiotransferase RimO (439 aa).

The MTTase N-terminal domain occupies 7–119; it reads KQLCLISLGC…IDIMIAKKQN (113 aa). Positions 16, 50, 82, 151, 155, and 158 each coordinate [4Fe-4S] cluster. Residues 137-368 enclose the Radical SAM core domain; it reads TGSSVHAYVK…ALKHQNHSFK (232 aa).

It belongs to the methylthiotransferase family. RimO subfamily. Requires [4Fe-4S] cluster as cofactor.

It is found in the cytoplasm. It catalyses the reaction L-aspartate(89)-[ribosomal protein uS12]-hydrogen + (sulfur carrier)-SH + AH2 + 2 S-adenosyl-L-methionine = 3-methylsulfanyl-L-aspartate(89)-[ribosomal protein uS12]-hydrogen + (sulfur carrier)-H + 5'-deoxyadenosine + L-methionine + A + S-adenosyl-L-homocysteine + 2 H(+). Catalyzes the methylthiolation of an aspartic acid residue of ribosomal protein uS12. The protein is Ribosomal protein uS12 methylthiotransferase RimO of Helicobacter pylori (strain ATCC 700392 / 26695) (Campylobacter pylori).